Consider the following 546-residue polypeptide: Hexose transporter HXT10 (546 aa).

Topologically, residues 1-44 (MVSSSVSILGTSAKASTSLSRKDEIKLTPETREASLDIPYKPII) are cytoplasmic. Residues 45–65 (AYWTVMGLCLMIAFGGFIFGW) form a helical membrane-spanning segment. Topologically, residues 66 to 100 (DTGTISGFINQTDFKRRFGELQRDGSFQLSDVRTG) are extracellular. An N-linked (GlcNAc...) asparagine glycan is attached at asparagine 75. Residues 101 to 121 (LIVGIFNIGCALGGLTLGRLG) form a helical membrane-spanning segment. Topologically, residues 122–127 (DIYGRK) are cytoplasmic. Residues 128-148 (IGLMCVILVYVVGIVIQIASS) traverse the membrane as a helical segment. The Extracellular portion of the chain corresponds to 149-158 (DKWYQYFIGR). Residues 159-179 (IVSGMGVGGVAVLSPTLISEI) traverse the membrane as a helical segment. The Cytoplasmic portion of the chain corresponds to 180 to 185 (SPKHLR). A helical transmembrane segment spans residues 186 to 206 (GTCVSFYQLMITLGIFLGYCT). Residues 207–220 (NYGTKKYSNSIQWR) lie on the Extracellular side of the membrane. A helical membrane pass occupies residues 221–241 (VPLGLCFAWAIFMVIGMVMVP). The Cytoplasmic segment spans residues 242–324 (ESPRYLVEKG…IQSLQQLTGC (83 aa)). The chain crosses the membrane as a helical span at residues 325–341 (NYFFYYGTTIFNAVGMQ). Residues 342–347 (DSFETS) are Extracellular-facing. A helical membrane pass occupies residues 348-365 (IVLGAVNFASTFVALYIV). At 366-372 (DKFGRRK) the chain is on the cytoplasmic side. Residues 373-393 (CLLWGSASMAICFVIFATVGV) form a helical membrane-spanning segment. Topologically, residues 394 to 415 (TRLWPQGKDQPSSQSAGNVMIV) are extracellular. A helical transmembrane segment spans residues 416 to 436 (FTCFFIFSFAITWAPIAYVIV). The Cytoplasmic segment spans residues 437–453 (AETYPLRVKNRAMAIAV). Residues 454–474 (GANWMWGFLIGFFTPFITRSI) form a helical membrane-spanning segment. Glycine 475 is a topological domain (extracellular). A helical membrane pass occupies residues 476 to 496 (FSYGYVFMGCLIFSYFYVFFF). Residues 497–546 (VCETKGLTLEEVNEMYEERIKPWKSGGWIPSSRRTPQPTSSTPLVIVDSK) lie on the Cytoplasmic side of the membrane.

This sequence belongs to the major facilitator superfamily. Sugar transporter (TC 2.A.1.1) family.

The protein resides in the membrane. In terms of biological role, probable glucose transporter. This is Hexose transporter HXT10 (HXT10) from Saccharomyces cerevisiae (strain ATCC 204508 / S288c) (Baker's yeast).